A 329-amino-acid chain; its full sequence is Serine dehydratase-like (329 aa).

Met1 carries the post-translational modification N-acetylmethionine. Lys48 is subject to N6-(pyridoxal phosphate)lysine.

This sequence belongs to the serine/threonine dehydratase family. As to quaternary structure, monomer. Homodimer. Requires pyridoxal 5'-phosphate as cofactor.

It catalyses the reaction L-serine = pyruvate + NH4(+). The catalysed reaction is L-threonine = 2-oxobutanoate + NH4(+). It carries out the reaction L-glutamate = D-glutamate. With respect to regulation, serine dehydratase activity is inhibited by manganese chloride, ferrous chloride, cobalt chloride, cupric chloride, nickel chloride and zinc chloride. Glutamate racemase activity is inhibited by manganese chloride, ferrous chloride, cupric chloride and zinc chloride. In terms of biological role, catalyzes the pyridoxal-phosphate-dependent dehydrative deamination of L-threonine and L-serine to ammonia and alpha-ketobutyrate and pyruvate, respectively. Also exhibits racemase activity towards L-glutamate and D-glutamate. The chain is Serine dehydratase-like (Sdsl) from Rattus norvegicus (Rat).